The chain runs to 535 residues: Glutamate--cysteine ligase (535 aa).

Belongs to the glutamate--cysteine ligase type 1 family. Type 1 subfamily.

It catalyses the reaction L-cysteine + L-glutamate + ATP = gamma-L-glutamyl-L-cysteine + ADP + phosphate + H(+). Its pathway is sulfur metabolism; glutathione biosynthesis; glutathione from L-cysteine and L-glutamate: step 1/2. This Pseudomonas savastanoi pv. phaseolicola (strain 1448A / Race 6) (Pseudomonas syringae pv. phaseolicola (strain 1448A / Race 6)) protein is Glutamate--cysteine ligase.